Consider the following 130-residue polypeptide: Small ribosomal subunit protein uS8 (130 aa).

It belongs to the universal ribosomal protein uS8 family. In terms of assembly, part of the 30S ribosomal subunit. Contacts proteins S5 and S12.

Functionally, one of the primary rRNA binding proteins, it binds directly to 16S rRNA central domain where it helps coordinate assembly of the platform of the 30S subunit. This is Small ribosomal subunit protein uS8 from Buchnera aphidicola subsp. Acyrthosiphon pisum (strain 5A).